A 510-amino-acid polypeptide reads, in one-letter code: GMP synthase [glutamine-hydrolyzing] (510 aa).

A Glutamine amidotransferase type-1 domain is found at Leu-5–Asp-195. Cys-82 functions as the Nucleophile in the catalytic mechanism. Active-site residues include His-169 and Glu-171. Positions Trp-196–Arg-385 constitute a GMPS ATP-PPase domain. Ser-223–Ser-229 lines the ATP pocket.

Homodimer.

The catalysed reaction is XMP + L-glutamine + ATP + H2O = GMP + L-glutamate + AMP + diphosphate + 2 H(+). The protein operates within purine metabolism; GMP biosynthesis; GMP from XMP (L-Gln route): step 1/1. Its function is as follows. Catalyzes the synthesis of GMP from XMP. The sequence is that of GMP synthase [glutamine-hydrolyzing] from Clostridium kluyveri (strain NBRC 12016).